The following is a 745-amino-acid chain: MSEVQSSAPAESWFGRFSNKILSLRGASYVVGALGLCALLAATMVTLSLNEQMIVALVCVAVFFIVGRRKSRRTQVFLEVLSALVSLRYLTWRLTETLDFDTWTQGILGVTLLLAELYALYMLFLSYFQTISPLHRAPLPLPANPDEWPTVDIFIPTYDEALSIVRLTVLGALGIDWPPDKVNVYILDDGRREEFARFAEACGARYIARPDNAHAKAGNLNYAIKHTTGDHILILDCDHIPTRAFLQISMGWMVSDSNIALLQTPHHFYSPDPFQRNLAVGYRTPPEGNLFYGVIQDGNDFWDATFFCGSCAILRRKAIEEIGGFATETVTEDAHTALRMQRKGWSTAYLRIPLASGLATERLITHIGQRMRWARGMIQIFRVDNPMLGSGLKLGQRLCYLSAMTSFFFAIPRVIFLASPLAFLFFSQNIIAASPLAVGVYAIPHMFHSIATAAKVNKGWRYSFWSEVYETVMALFLVRVTIVTMLFPSKGKFNVTEKGGVLEREEFDLTATYPNIIFAIIMALGLLRGLYALIFQHLDIISERAYALNCIWSVISLIILMAVISVGRETKQLRQSHRIEAQIPVTVYDYDGNSSHGITEDVSMGGVAIHLPWREVTPDHPVQVVIHAVLDGEEMNLPATMIRSAQGKAVFTWSISNIQVEAAVVRFVFGRADAWLQWNNYEDDRPLRSLWSLILSIKALFRRKGQMIAHSRPKKKPIALPVERREPTTSQGGQKQEGKISRAAS.

The next 3 membrane-spanning stretches (helical) occupy residues 29–49, 106–126, and 153–173; these read YVVGALGLCALLAATMVTLSL, GILGVTLLLAELYALYMLFLS, and IFIPTYDEALSIVRLTVLGAL. A catalytic subdomain A region spans residues 147–240; that stretch reads EWPTVDIFIP…HILILDCDHI (94 aa). Asp189 is a catalytic residue. 2 residues coordinate substrate: Asp236 and Asp238. The interval 317–377 is catalytic subdomain B; sequence KAIEEIGGFA…GQRMRWARGM (61 aa). Asp333 is an active-site residue. The next 6 membrane-spanning stretches (helical) occupy residues 407 to 427, 430 to 450, 468 to 488, 515 to 535, 547 to 567, and 649 to 669; these read FFFAIPRVIFLASPLAFLFFS, IIAASPLAVGVYAIPHMFHSI, VYETVMALFLVRVTIVTMLFP, NIIFAIIMALGLLRGLYALIF, ALNCIWSVISLIILMAVISVG, and AVFTWSISNIQVEAAVVRFVF. The PilZ domain occupies 572–670; it reads QLRQSHRIEA…EAAVVRFVFG (99 aa). The span at 708–717 shows a compositional bias: basic residues; it reads IAHSRPKKKP. The disordered stretch occupies residues 708–745; the sequence is IAHSRPKKKPIALPVERREPTTSQGGQKQEGKISRAAS. Residues 736-745 show a composition bias toward basic and acidic residues; it reads QEGKISRAAS.

This sequence belongs to the glycosyltransferase 2 family. It depends on Mg(2+) as a cofactor.

It localises to the cell inner membrane. The enzyme catalyses [(1-&gt;4)-beta-D-glucosyl](n) + UDP-alpha-D-glucose = [(1-&gt;4)-beta-D-glucosyl](n+1) + UDP + H(+). It participates in glycan metabolism; bacterial cellulose biosynthesis. Activated by bis-(3'-5') cyclic diguanylic acid (c-di-GMP). Its function is as follows. Catalytic subunit of cellulose synthase. It polymerizes uridine 5'-diphosphate glucose to cellulose. The thick cellulosic mats generated by this enzyme probably provide a specialized protective environment to the bacterium. The polypeptide is Cellulose synthase 1 catalytic subunit [UDP-forming] (bcsAI) (Komagataeibacter xylinus (Gluconacetobacter xylinus)).